Reading from the N-terminus, the 352-residue chain is tRNA pseudouridine synthase D (352 aa).

Residue aspartate 81 is the Nucleophile of the active site. The 147-residue stretch at 157 to 303 (GIPNYFGVQR…MEHERRILRL (147 aa)) folds into the TRUD domain.

It belongs to the pseudouridine synthase TruD family.

It carries out the reaction uridine(13) in tRNA = pseudouridine(13) in tRNA. Functionally, responsible for synthesis of pseudouridine from uracil-13 in transfer RNAs. The sequence is that of tRNA pseudouridine synthase D from Pseudomonas syringae pv. tomato (strain ATCC BAA-871 / DC3000).